Here is a 406-residue protein sequence, read N- to C-terminus: Zinc finger CCCH domain-containing protein 15 homolog (406 aa).

The span at 1–11 (MPPKKAPAGPS) shows a compositional bias: low complexity. The tract at residues 1–70 (MPPKKAPAGP…DKKKDEKEKK (70 aa)) is disordered. Residues 12–28 (KKTEQKKKEKVIEDKTF) show a composition bias toward basic and acidic residues. Over residues 38–50 (QQKFIQQVQKQVQ) the composition is skewed to low complexity. Positions 56–70 (PRQDGDKKKDEKEKK) are enriched in basic and acidic residues. Positions 57–82 (RQDGDKKKDEKEKKLADLREMASIFK) form a coiled coil. 2 C3H1-type zinc fingers span residues 94–121 (DPKS…HDLS) and 166–203 (PTTE…HALP). The interval 336 to 382 (VDGSGTIASSTRLLDQATEAAKTAAAEDGAASDDENPSSSAPANDAA) is disordered. Low complexity-rich tracts occupy residues 352–364 (ATEA…AEDG) and 372–382 (PSSSAPANDAA).

The protein belongs to the ZC3H15/TMA46 family.

The protein is Zinc finger CCCH domain-containing protein 15 homolog of Drosophila pseudoobscura pseudoobscura (Fruit fly).